The sequence spans 616 residues: Dihydroxy-acid dehydratase (616 aa).

Residue Asp81 participates in Mg(2+) binding. Cys122 serves as a coordination point for [2Fe-2S] cluster. Residues Asp123 and Lys124 each contribute to the Mg(2+) site. Lys124 carries the N6-carboxylysine modification. Cys195 provides a ligand contact to [2Fe-2S] cluster. Glu491 lines the Mg(2+) pocket. Ser517 acts as the Proton acceptor in catalysis.

It belongs to the IlvD/Edd family. In terms of assembly, homodimer. Requires [2Fe-2S] cluster as cofactor. It depends on Mg(2+) as a cofactor.

The catalysed reaction is (2R)-2,3-dihydroxy-3-methylbutanoate = 3-methyl-2-oxobutanoate + H2O. The enzyme catalyses (2R,3R)-2,3-dihydroxy-3-methylpentanoate = (S)-3-methyl-2-oxopentanoate + H2O. The protein operates within amino-acid biosynthesis; L-isoleucine biosynthesis; L-isoleucine from 2-oxobutanoate: step 3/4. It functions in the pathway amino-acid biosynthesis; L-valine biosynthesis; L-valine from pyruvate: step 3/4. Functions in the biosynthesis of branched-chain amino acids. Catalyzes the dehydration of (2R,3R)-2,3-dihydroxy-3-methylpentanoate (2,3-dihydroxy-3-methylvalerate) into 2-oxo-3-methylpentanoate (2-oxo-3-methylvalerate) and of (2R)-2,3-dihydroxy-3-methylbutanoate (2,3-dihydroxyisovalerate) into 2-oxo-3-methylbutanoate (2-oxoisovalerate), the penultimate precursor to L-isoleucine and L-valine, respectively. The polypeptide is Dihydroxy-acid dehydratase (Salmonella paratyphi A (strain ATCC 9150 / SARB42)).